The following is a 249-amino-acid chain: Acetylglutamate kinase (249 aa).

Substrate-binding positions include 42 to 43, Arg-64, and Asn-155; that span reads GG.

It belongs to the acetylglutamate kinase family. ArgB subfamily.

The protein resides in the cytoplasm. It catalyses the reaction N-acetyl-L-glutamate + ATP = N-acetyl-L-glutamyl 5-phosphate + ADP. It participates in amino-acid biosynthesis; L-arginine biosynthesis; N(2)-acetyl-L-ornithine from L-glutamate: step 2/4. In terms of biological role, catalyzes the ATP-dependent phosphorylation of N-acetyl-L-glutamate. This chain is Acetylglutamate kinase, found in Endomicrobium trichonymphae.